Consider the following 379-residue polypeptide: Stimulator of interferon genes protein (379 aa).

2 consecutive transmembrane segments (helical) span residues 18 to 38 (AKKA…DLGE) and 43 to 63 (ILQW…FKGV). S-palmitoyl cysteine attachment occurs at residues cysteine 88 and cysteine 91. Transmembrane regions (helical) follow at residues 89 to 109 (LGCP…YTPF) and 114 to 134 (HLPF…SILL). Residues 153 to 340 (LNVAQGMAWS…RHLKQEEKEE (188 aa)) form a cyclic dinucleotide-binding domain (CBD) region. The 2',3'-cGAMP site is built by serine 162, tyrosine 167, arginine 238, and threonine 263. 3',3'-c-di-GMP-binding positions include serine 162, tyrosine 167, 238-241 (RVYT), and threonine 263. Tyrosine 167, arginine 238, and threonine 263 together coordinate 2',3'-cUAMP. The tract at residues 338 to 363 (KEEVTVDSARTSVMPDPSMLPQGPEL) is disordered. Residues 340–379 (EVTVDSARTSVMPDPSMLPQGPELLISSMDQPLPLRTDVF) form a C-terminal tail (CTT) region. A Phosphoserine modification is found at serine 355. The short motif at 363-366 (LLIS) is the pLxIS motif element. Phosphoserine; by TBK1 is present on serine 366.

This sequence belongs to the STING family. Homodimer; forms a homodimer in absence of cyclic nucleotide (c-di-GMP or cGAMP). Homotetramer; in presence of cyclic nucleotide (c-di-GMP or cGAMP), forms tetramers and higher-order oligomers through side-by-side packing. Interacts (when phosphorylated) with IRF3; following activation and phosphorylation on the pLxIS motif by TBK1, recruits IRF3. Interacts with TBK1; when homodimer, leading to subsequent production of IFN-beta. Interacts (via transmembrane domain) with TMEM203. Post-translationally, phosphorylation by TBK1 leads to activation and production of IFN-beta. Following cyclic nucleotide (c-di-GMP or cGAMP)-binding, activation and translocation from the endoplasmic reticulum, STING1 is phosphorylated by TBK1 at Ser-366 in the pLxIS motif. The phosphorylated pLxIS motif constitutes an IRF3-binding motif, leading to recruitment of the transcription factor IRF3 to induce type-I interferons and other cytokines. In contrast, lacks phosphorylation site at position 358, leading to reduced production of type-I interferons and other cytokines.

It localises to the endoplasmic reticulum membrane. The protein resides in the cytoplasm. The protein localises to the perinuclear region. It is found in the endoplasmic reticulum-Golgi intermediate compartment membrane. Its subcellular location is the golgi apparatus membrane. It localises to the cytoplasmic vesicle. The protein resides in the autophagosome membrane. The protein localises to the mitochondrion outer membrane. It is found in the cell membrane. It carries out the reaction H(+)(in) = H(+)(out). Facilitator of innate immune signaling that acts as a sensor of cytosolic DNA from bacteria and viruses and promotes low production of type I interferon (IFN-alpha and IFN-beta). Compared to other mammals, STING1-dependent type I interferon induction is strongly reduced in bats, suggesting that the cGAS-STING pathway promotes a limited inflammatory response. Innate immune response is triggered in response to non-CpG double-stranded DNA from viruses and bacteria delivered to the cytoplasm. Acts by binding cyclic dinucleotides: recognizes and binds cyclic di-GMP (c-di-GMP), a second messenger produced by bacteria, cyclic UMP-AMP (2',3'-cUAMP), and cyclic GMP-AMP (cGAMP), a messenger produced by CGAS in response to DNA virus in the cytosol. Upon binding to c-di-GMP, cUAMP or cGAMP, STING1 oligomerizes, translocates from the endoplasmic reticulum and is phosphorylated by TBK1 on the pLxIS motif, leading to recruitment and subsequent activation of the transcription factor IRF3 to induce expression of type I interferon and exert a potent anti-viral state. In addition to promote the production of type I interferons, plays a direct role in autophagy. Following cGAMP-binding, STING1 buds from the endoplasmic reticulum into COPII vesicles, which then form the endoplasmic reticulum-Golgi intermediate compartment (ERGIC). The ERGIC serves as the membrane source for WIPI2 recruitment and LC3 lipidation, leading to formation of autophagosomes that target cytosolic DNA or DNA viruses for degradation by the lysosome. Promotes autophagy by acting as a proton channel that directs proton efflux from the Golgi to facilitate MAP1LC3B/LC3B lipidation. The autophagy- and interferon-inducing activities can be uncoupled and autophagy induction is independent of TBK1 phosphorylation. This Pteronotus parnellii (Parnell's mustached bat) protein is Stimulator of interferon genes protein.